Here is a 227-residue protein sequence, read N- to C-terminus: Ribonuclease S-5 (227 aa).

The first 27 residues, 1 to 27, serve as a signal peptide directing secretion; sequence MGITGMVYVVTMVFLLIVLILSSSTVG. Glutamine 36 provides a ligand contact to RNA. Cysteine 42 and cysteine 49 are joined by a disulfide. N-linked (GlcNAc...) asparagine glycosylation is present at asparagine 45. RNA-binding positions include histidine 60, 97–98, phenylalanine 107, 110–111, and 114–115; these read NV, KE, and KH. Histidine 60 (proton donor) is an active-site residue. Cysteine 75 and cysteine 118 are oxidised to a cystine. Residue glutamate 111 is part of the active site. Histidine 115 (proton acceptor) is an active-site residue. Asparagine 143 carries an N-linked (GlcNAc...) asparagine glycan. 2 disulfide bridges follow: cysteine 182–cysteine 220 and cysteine 197–cysteine 208.

The protein belongs to the RNase T2 family. N-glycan at Asn-45 consists of disaccharide (GlcNAc-GlcNAc). N-linked core structure at Asn-143 contains xylose.

The catalysed reaction is a ribonucleotidyl-ribonucleotide-RNA + H2O = a 3'-end 3'-phospho-ribonucleotide-RNA + a 5'-end dephospho-ribonucleoside-RNA + H(+). In terms of biological role, self-incompatibility (SI) is the inherited ability of a flowering plant to prevent self-fertilization by discriminating between self and non-self pollen during pollination. In many species, self-incompatibility is controlled by the single, multiallelic locus S. This is Ribonuclease S-5 from Pyrus pyrifolia (Chinese pear).